The primary structure comprises 112 residues: Probable prefoldin subunit 1 (112 aa).

This sequence belongs to the prefoldin subunit beta family. As to quaternary structure, heterohexamer of two PFD-alpha type and four PFD-beta type subunits.

Binds specifically to cytosolic chaperonin (c-CPN) and transfers target proteins to it. Binds to nascent polypeptide chain and promotes folding in an environment in which there are many competing pathways for nonnative proteins. The polypeptide is Probable prefoldin subunit 1 (Schizosaccharomyces pombe (strain 972 / ATCC 24843) (Fission yeast)).